Consider the following 384-residue polypeptide: Galactokinase (384 aa).

34–37 (EHTD) lines the substrate pocket. 123–129 (SSGLSSS) serves as a coordination point for ATP. Mg(2+) is bound by residues Ser129 and Glu161. Catalysis depends on Asp173, which acts as the Proton acceptor. A substrate-binding site is contributed by Tyr222.

Belongs to the GHMP kinase family. GalK subfamily.

It localises to the cytoplasm. The catalysed reaction is alpha-D-galactose + ATP = alpha-D-galactose 1-phosphate + ADP + H(+). It functions in the pathway carbohydrate metabolism; galactose metabolism. In terms of biological role, catalyzes the transfer of the gamma-phosphate of ATP to D-galactose to form alpha-D-galactose-1-phosphate (Gal-1-P). The protein is Galactokinase of Actinobacillus pleuropneumoniae (Haemophilus pleuropneumoniae).